The chain runs to 136 residues: Cytochrome c-550 (136 aa).

The signal sequence occupies residues 1–28; that stretch reads MTKLTFGALVALAMTAAASTAMSSKAMA. Residues Cys41, Cys44, His45, and Met107 each contribute to the heme c site.

Binds 1 heme c group covalently per subunit. In terms of processing, the N-terminus is blocked.

Its subcellular location is the periplasm. Plays a role in bacteroid respiration under conditions of oxygen limitation. Required for electron-transfer during denitrification. This chain is Cytochrome c-550 (cycA), found in Bradyrhizobium diazoefficiens (strain JCM 10833 / BCRC 13528 / IAM 13628 / NBRC 14792 / USDA 110).